Consider the following 244-residue polypeptide: Protein-L-isoaspartate O-methyltransferase (244 aa).

The disordered stretch occupies residues 1 to 39 (MINPFSSFRWRHSSRSPAGIPEVEPQPPDASDPFASQRE). Ser92 is an active-site residue.

Belongs to the methyltransferase superfamily. L-isoaspartyl/D-aspartyl protein methyltransferase family.

The protein localises to the cytoplasm. The enzyme catalyses [protein]-L-isoaspartate + S-adenosyl-L-methionine = [protein]-L-isoaspartate alpha-methyl ester + S-adenosyl-L-homocysteine. Catalyzes the methyl esterification of L-isoaspartyl residues in peptides and proteins that result from spontaneous decomposition of normal L-aspartyl and L-asparaginyl residues. It plays a role in the repair and/or degradation of damaged proteins. The protein is Protein-L-isoaspartate O-methyltransferase of Synechococcus sp. (strain JA-2-3B'a(2-13)) (Cyanobacteria bacterium Yellowstone B-Prime).